We begin with the raw amino-acid sequence, 153 residues long: Myosin regulatory light chain LC-2, mantle muscle (153 aa).

At Ala1 the chain carries Blocked amino end (Ala). EF-hand domains follow at residues 13 to 48 (RQMQ…LGRV) and 82 to 117 (DPED…MGDN). Residues Asp26, Asp28, Asp30, and Asp37 each contribute to the Ca(2+) site.

In molluscan muscle, calcium regulation is associated with myosin rather than with actin. Muscle myosin contains two types of light chains: the catalytic light chain, essential for ATPase activity, and the regulatory light chain, a calcium-binding protein responsible for Ca(2+) dependent binding and Ca(2+) dependent Mg-ATPase activity. The chain is Myosin regulatory light chain LC-2, mantle muscle from Todarodes pacificus (Japanese flying squid).